Consider the following 509-residue polypeptide: Maturase K (509 aa).

Belongs to the intron maturase 2 family. MatK subfamily.

The protein localises to the plastid. It localises to the chloroplast. Functionally, usually encoded in the trnK tRNA gene intron. Probably assists in splicing its own and other chloroplast group II introns. The sequence is that of Maturase K from Citrus sinensis (Sweet orange).